The chain runs to 271 residues: Phosphate import ATP-binding protein PstB (271 aa).

An ABC transporter domain is found at 24–266 (MIGNDVSVYY…PDDQRTQDYI (243 aa)). 56–63 (GPSGCGKS) is an ATP binding site.

This sequence belongs to the ABC transporter superfamily. Phosphate importer (TC 3.A.1.7) family. In terms of assembly, the complex is composed of two ATP-binding proteins (PstB), two transmembrane proteins (PstC and PstA) and a solute-binding protein (PstS).

The protein localises to the cell inner membrane. It carries out the reaction phosphate(out) + ATP + H2O = ADP + 2 phosphate(in) + H(+). Functionally, part of the ABC transporter complex PstSACB involved in phosphate import. Responsible for energy coupling to the transport system. The sequence is that of Phosphate import ATP-binding protein PstB from Rhizobium meliloti (strain 1021) (Ensifer meliloti).